We begin with the raw amino-acid sequence, 274 residues long: 4-hydroxy-3-methylbut-2-enyl diphosphate reductase (274 aa).

A [4Fe-4S] cluster-binding site is contributed by cysteine 12. Residues histidine 36 and histidine 70 each contribute to the (2E)-4-hydroxy-3-methylbut-2-enyl diphosphate site. Dimethylallyl diphosphate is bound by residues histidine 36 and histidine 70. Isopentenyl diphosphate contacts are provided by histidine 36 and histidine 70. Cysteine 92 is a binding site for [4Fe-4S] cluster. Histidine 120 lines the (2E)-4-hydroxy-3-methylbut-2-enyl diphosphate pocket. Residue histidine 120 participates in dimethylallyl diphosphate binding. Histidine 120 lines the isopentenyl diphosphate pocket. Residue glutamate 122 is the Proton donor of the active site. Threonine 158 contacts (2E)-4-hydroxy-3-methylbut-2-enyl diphosphate. Residue cysteine 186 participates in [4Fe-4S] cluster binding. (2E)-4-hydroxy-3-methylbut-2-enyl diphosphate is bound by residues serine 214, serine 215, asparagine 216, and serine 258. Serine 214, serine 215, asparagine 216, and serine 258 together coordinate dimethylallyl diphosphate. Isopentenyl diphosphate is bound by residues serine 214, serine 215, asparagine 216, and serine 258.

It belongs to the IspH family. The cofactor is [4Fe-4S] cluster.

It carries out the reaction isopentenyl diphosphate + 2 oxidized [2Fe-2S]-[ferredoxin] + H2O = (2E)-4-hydroxy-3-methylbut-2-enyl diphosphate + 2 reduced [2Fe-2S]-[ferredoxin] + 2 H(+). The enzyme catalyses dimethylallyl diphosphate + 2 oxidized [2Fe-2S]-[ferredoxin] + H2O = (2E)-4-hydroxy-3-methylbut-2-enyl diphosphate + 2 reduced [2Fe-2S]-[ferredoxin] + 2 H(+). The protein operates within isoprenoid biosynthesis; dimethylallyl diphosphate biosynthesis; dimethylallyl diphosphate from (2E)-4-hydroxy-3-methylbutenyl diphosphate: step 1/1. It functions in the pathway isoprenoid biosynthesis; isopentenyl diphosphate biosynthesis via DXP pathway; isopentenyl diphosphate from 1-deoxy-D-xylulose 5-phosphate: step 6/6. Functionally, catalyzes the conversion of 1-hydroxy-2-methyl-2-(E)-butenyl 4-diphosphate (HMBPP) into a mixture of isopentenyl diphosphate (IPP) and dimethylallyl diphosphate (DMAPP). Acts in the terminal step of the DOXP/MEP pathway for isoprenoid precursor biosynthesis. The polypeptide is 4-hydroxy-3-methylbut-2-enyl diphosphate reductase (Campylobacter concisus (strain 13826)).